Consider the following 477-residue polypeptide: Ribulose bisphosphate carboxylase large chain (477 aa).

Residues 1–2 constitute a propeptide that is removed on maturation; the sequence is MS. An N-acetylproline modification is found at proline 3. Lysine 14 is modified (N6,N6,N6-trimethyllysine). Residues asparagine 123 and threonine 173 each contribute to the substrate site. Lysine 175 functions as the Proton acceptor in the catalytic mechanism. Lysine 177 provides a ligand contact to substrate. Residues lysine 201, aspartate 203, and glutamate 204 each contribute to the Mg(2+) site. The residue at position 201 (lysine 201) is an N6-carboxylysine. Catalysis depends on histidine 294, which acts as the Proton acceptor. Positions 295, 327, and 379 each coordinate substrate.

This sequence belongs to the RuBisCO large chain family. Type I subfamily. Heterohexadecamer of 8 large chains and 8 small chains; disulfide-linked. The disulfide link is formed within the large subunit homodimers. Mg(2+) serves as cofactor. The disulfide bond which can form in the large chain dimeric partners within the hexadecamer appears to be associated with oxidative stress and protein turnover.

The protein localises to the plastid. It is found in the chloroplast. The enzyme catalyses 2 (2R)-3-phosphoglycerate + 2 H(+) = D-ribulose 1,5-bisphosphate + CO2 + H2O. It catalyses the reaction D-ribulose 1,5-bisphosphate + O2 = 2-phosphoglycolate + (2R)-3-phosphoglycerate + 2 H(+). In terms of biological role, ruBisCO catalyzes two reactions: the carboxylation of D-ribulose 1,5-bisphosphate, the primary event in carbon dioxide fixation, as well as the oxidative fragmentation of the pentose substrate in the photorespiration process. Both reactions occur simultaneously and in competition at the same active site. The sequence is that of Ribulose bisphosphate carboxylase large chain from Solanum bulbocastanum (Wild potato).